Reading from the N-terminus, the 117-residue chain is Large ribosomal subunit protein uL18 (117 aa).

It belongs to the universal ribosomal protein uL18 family. In terms of assembly, part of the 50S ribosomal subunit; part of the 5S rRNA/L5/L18/L25 subcomplex. Contacts the 5S and 23S rRNAs.

Functionally, this is one of the proteins that bind and probably mediate the attachment of the 5S RNA into the large ribosomal subunit, where it forms part of the central protuberance. The sequence is that of Large ribosomal subunit protein uL18 from Yersinia pseudotuberculosis serotype O:1b (strain IP 31758).